We begin with the raw amino-acid sequence, 1074 residues long: MKDIGQQLYTTHLNGGHNSLTMSPKQPDANGAPRPNRQEAQTLLYQGSEAEAAMMTIATCAKCKSVHKISLQDLQKGTGKDGMYVCFQCSLGAAPPNFHFVSNNSSATHVGNKTENFSSSVNSKFKVRNFKPGKYYCDKCRFSTKDPLQYKKHTLQHEEIKFICSHCSYISYTKGEFQRHLVKHTGIFPYQCEYCDYGAIRNDYIVKHTKRVHERAGAKRPVKAVAKLEPKRTGTSKQNPELLKASNPRTTFQNKWSDQLSGFSLHANKDKMHNIMLLPEPKEYQKDVVCIPNKMTLSEPNEVNLFENKNVEVEVLSPAKEPVQPGMPLTVVAPAELVVPANCLAQLIDVKVVNGTQQLVLKLFPLEENNCLEAGRDNGGNSERMVKEKGSNEQEKVLSAEKTKSLTVDGNVGKLVGIDSFQPSVQKQLKNVKWVRSYDFIMPNSSVHNNGKSFINSETIEDFQKKNNLYPHRTAFPSVALKGHSLASVFKNSVLRSLGAASNPFPYKAAVCFAESGRNLHSSSQQLLPFAASPATCSFSGEKGLLPVSENDLESTSKVNIPVKVVSSNRKQEDNQTEEHKAVSTVGQISSQHKSEYLHINITGEDRSQQPGDKPLELKNSERTNNTNDGPVISSVFSLSSGSENVPEGIKWNSSTSKIKSIELLRRKIAQLIESCGKPSSLASNSAHRRSVGQASKGTSKATSEGIQEINVSLTGLGHSTGTLQKPPNDGGITGNRQLTHQQIYPHFADGSNRKTKSRVARKAHVATPVLIPKGAVLRVLNSSENAHIIEATCEAPVSIPCSERQLIKPVPFCPVRQADSDLQPLRSERGPIDMSPNIETPLRPKLRKESAVCSTIHRKTGLLYGQQGSSELNKQGRLLSRSLSISRNKTKQVHLSRKKNKIQAEPSRCLKDPSIFQVARQLRLIAAKPDQLIKCPRRNQPVIVLNHPDVDSPEVTNVMKVINKYKGNVLKVVLSERTRCQLGIRRHHVRLTYQNAEEASQIKRQMMLKMKLKKVHKNNYQVVDSLPDDSSQCVFKCWFCGRLYEDQEEWMSHGQRHLIEATRDWDVLSSKGK.

A compositionally biased stretch (polar residues) spans 12–24 (HLNGGHNSLTMSP). The segment at 12-36 (HLNGGHNSLTMSPKQPDANGAPRPN) is disordered. 2 C2H2-type zinc fingers span residues 162–184 (FICS…LVKH) and 190–213 (YQCE…KRVH). Residues Lys482, Lys491, and Lys558 each participate in a glycyl lysine isopeptide (Lys-Gly) (interchain with G-Cter in SUMO2) cross-link. A disordered region spans residues 568–590 (SNRKQEDNQTEEHKAVSTVGQIS). Basic and acidic residues predominate over residues 570 to 582 (RKQEDNQTEEHKA). Lys594 is covalently cross-linked (Glycyl lysine isopeptide (Lys-Gly) (interchain with G-Cter in SUMO2)). 2 disordered regions span residues 603–632 (TGED…DGPV) and 678–704 (KPSS…KATS). Residues 604–622 (GEDRSQQPGDKPLELKNSE) are compositionally biased toward basic and acidic residues. Residues 693–704 (GQASKGTSKATS) show a composition bias toward polar residues. Residues Lys809, Lys846, and Lys860 each participate in a glycyl lysine isopeptide (Lys-Gly) (interchain with G-Cter in SUMO2) cross-link. The segment at 1036–1058 (FKCWFCGRLYEDQEEWMSHGQRH) adopts a C2H2-type 3 zinc-finger fold.

The protein belongs to the krueppel C2H2-type zinc-finger protein family.

The protein localises to the nucleus. In terms of biological role, through its association with the EHMT1-EHMT2/G9A and PRC2/EED-EZH2 histone methyltransferase complexes may function in gene silencing, regulating repressive post-translational methylation of histone tails at promoters of target genes. The protein is Zinc finger protein 518B (ZNF518B) of Homo sapiens (Human).